The chain runs to 38 residues: Large ribosomal subunit protein bL36 (38 aa).

Belongs to the bacterial ribosomal protein bL36 family.

This chain is Large ribosomal subunit protein bL36, found in Stutzerimonas stutzeri (strain A1501) (Pseudomonas stutzeri).